Reading from the N-terminus, the 130-residue chain is MKKVNYFGTGRRKSAVARVILTNGTGKITINTRDFEKYLPLPATRLEMIQPLELTEKREAFDVSVNVNGGGLSAQAGAIRLGIARALIESVPELRAILKKAGLLTRDARCVERKKYGLKKARRAPQFSKR.

It belongs to the universal ribosomal protein uS9 family.

The sequence is that of Small ribosomal subunit protein uS9 from Onion yellows phytoplasma (strain OY-M).